A 225-amino-acid polypeptide reads, in one-letter code: UPF0758 protein Sputw3181_0338 (225 aa).

One can recognise an MPN domain in the interval 102–224; that stretch reads VLTNPDLTRD…IVSFAERGWI (123 aa). Positions 173, 175, and 186 each coordinate Zn(2+). Residues 173-186 carry the JAMM motif motif; it reads HNHPSGIAEPSQAD.

It belongs to the UPF0758 family.

The sequence is that of UPF0758 protein Sputw3181_0338 from Shewanella sp. (strain W3-18-1).